Consider the following 736-residue polypeptide: 1,4-alpha-glucan branching enzyme GlgB (736 aa).

D415 acts as the Nucleophile in catalysis. Residue E470 is the Proton donor of the active site.

The protein belongs to the glycosyl hydrolase 13 family. GlgB subfamily. As to quaternary structure, monomer.

It catalyses the reaction Transfers a segment of a (1-&gt;4)-alpha-D-glucan chain to a primary hydroxy group in a similar glucan chain.. It functions in the pathway glycan biosynthesis; glycogen biosynthesis. Catalyzes the formation of the alpha-1,6-glucosidic linkages in glycogen by scission of a 1,4-alpha-linked oligosaccharide from growing alpha-1,4-glucan chains and the subsequent attachment of the oligosaccharide to the alpha-1,6 position. This Paraburkholderia xenovorans (strain LB400) protein is 1,4-alpha-glucan branching enzyme GlgB.